A 69-amino-acid chain; its full sequence is Sperm protamine P1 (69 aa).

Residues 1–69 are disordered; it reads MASYRNSRSR…RKRNNNTENK (69 aa). 2 stretches are compositionally biased toward basic residues: residues 7–25 and 34–63; these read SRSR…RSRV and RSSR…RKRN.

This sequence belongs to the protamine P1 family. Testis.

The protein resides in the nucleus. The protein localises to the chromosome. In terms of biological role, protamines substitute for histones in the chromatin of sperm during the haploid phase of spermatogenesis. They compact sperm DNA into a highly condensed, stable and inactive complex. The chain is Sperm protamine P1 (PRM1) from Perameles gunnii (Eastern barred bandicoot).